Here is an 874-residue protein sequence, read N- to C-terminus: Alanine--tRNA ligase (874 aa).

Zn(2+) is bound by residues histidine 563, histidine 567, cysteine 665, and histidine 669.

It belongs to the class-II aminoacyl-tRNA synthetase family. Zn(2+) serves as cofactor.

It is found in the cytoplasm. It catalyses the reaction tRNA(Ala) + L-alanine + ATP = L-alanyl-tRNA(Ala) + AMP + diphosphate. Functionally, catalyzes the attachment of alanine to tRNA(Ala) in a two-step reaction: alanine is first activated by ATP to form Ala-AMP and then transferred to the acceptor end of tRNA(Ala). Also edits incorrectly charged Ser-tRNA(Ala) and Gly-tRNA(Ala) via its editing domain. In Aeromonas salmonicida (strain A449), this protein is Alanine--tRNA ligase.